Consider the following 512-residue polypeptide: DEAD-box ATP-dependent RNA helicase 5 (512 aa).

Disordered stretches follow at residues 1-33 and 45-76; these read MGRSMLPEQQEDVSRKSKKEKKSKKDKKRKLEA and ATSTDEATKSSKKKRAKGDLGQGEEAENGGGK. The stretch at 14–45 forms a coiled coil; the sequence is SRKSKKEKKSKKDKKRKLEAEAEVVVVEAAAA. Residues 16–30 are compositionally biased toward basic residues; that stretch reads KSKKEKKSKKDKKRK. The short motif at 94–120 is the Q motif element; it reads SSFAATALPPQVLDCCKGFERPSPIQA. The Helicase ATP-binding domain occupies 123–300; sequence WPYLLDGRDF…QEFMDPNPIK (178 aa). ATP is bound at residue 136 to 143; the sequence is AATGSGKT. The short motif at 248 to 251 is the DEAD box element; that stretch reads DEAD. Residues 333–476 form the Helicase C-terminal domain; that stretch reads LLDKYHKAQR…VVPPALTKFG (144 aa).

The protein belongs to the DEAD box helicase family. DDX5/DBP2 subfamily.

It localises to the nucleus. Its subcellular location is the nucleolus. The enzyme catalyses ATP + H2O = ADP + phosphate + H(+). Functionally, ATP-dependent RNA helicase required for 60S ribosomal subunit synthesis. Involved in efficient pre-rRNA processing, predominantly at site A3, which is necessary for the normal formation of 25S and 5.8S rRNAs. The protein is DEAD-box ATP-dependent RNA helicase 5 of Oryza sativa subsp. japonica (Rice).